We begin with the raw amino-acid sequence, 540 residues long: Peptide chain release factor 3 (540 aa).

The 270-residue stretch at 14–283 (ELRRNFAIIS…YFLNYALKPG (270 aa)) folds into the tr-type G domain. Residues 23 to 30 (SHPDAGKT), 91 to 95 (DTPGH), and 145 to 148 (NKLD) each bind GTP.

The protein belongs to the TRAFAC class translation factor GTPase superfamily. Classic translation factor GTPase family. PrfC subfamily.

The protein localises to the cytoplasm. Functionally, increases the formation of ribosomal termination complexes and stimulates activities of RF-1 and RF-2. It binds guanine nucleotides and has strong preference for UGA stop codons. It may interact directly with the ribosome. The stimulation of RF-1 and RF-2 is significantly reduced by GTP and GDP, but not by GMP. This is Peptide chain release factor 3 from Trichormus variabilis (strain ATCC 29413 / PCC 7937) (Anabaena variabilis).